Reading from the N-terminus, the 341-residue chain is HTH-type transcriptional repressor PurR (341 aa).

The region spanning 2–56 is the HTH lacI-type domain; that stretch reads ATIKDVAKRANVSTTTVSHVINKTRFVAEETRNAVWAAIKELHYSPSAVARSLKV. Positions 4-23 form a DNA-binding region, H-T-H motif; it reads IKDVAKRANVSTTTVSHVIN. The DNA-binding element occupies 48 to 56; that stretch reads SAVARSLKV. 5 residues coordinate hypoxanthine: Y73, R190, T192, F221, and D275.

In terms of assembly, homodimer.

Its pathway is purine metabolism; purine nucleotide biosynthesis [regulation]. In terms of biological role, is the main repressor of the genes involved in the de novo synthesis of purine nucleotides, regulating purB, purC, purEK, purF, purHD, purL, purMN and guaBA expression. PurR is allosterically activated to bind its cognate DNA by binding the purine corepressors, hypoxanthine or guanine, thereby effecting transcription repression. This is HTH-type transcriptional repressor PurR from Salmonella arizonae (strain ATCC BAA-731 / CDC346-86 / RSK2980).